The sequence spans 456 residues: tRNA-2-methylthio-N(6)-dimethylallyladenosine synthase (456 aa).

The region spanning 13-129 (RYLYVRTFGC…IASLLEEVER (117 aa)) is the MTTase N-terminal domain. The [4Fe-4S] cluster site is built by cysteine 22, cysteine 58, cysteine 92, cysteine 168, cysteine 172, and cysteine 175. The region spanning 154–384 (GTGDVVAQVT…QSIQADITLQ (231 aa)) is the Radical SAM core domain. The TRAM domain occupies 387-450 (LAETGTVREV…SHSLKGELLS (64 aa)).

It belongs to the methylthiotransferase family. MiaB subfamily. Monomer. It depends on [4Fe-4S] cluster as a cofactor.

It is found in the cytoplasm. It catalyses the reaction N(6)-dimethylallyladenosine(37) in tRNA + (sulfur carrier)-SH + AH2 + 2 S-adenosyl-L-methionine = 2-methylsulfanyl-N(6)-dimethylallyladenosine(37) in tRNA + (sulfur carrier)-H + 5'-deoxyadenosine + L-methionine + A + S-adenosyl-L-homocysteine + 2 H(+). In terms of biological role, catalyzes the methylthiolation of N6-(dimethylallyl)adenosine (i(6)A), leading to the formation of 2-methylthio-N6-(dimethylallyl)adenosine (ms(2)i(6)A) at position 37 in tRNAs that read codons beginning with uridine. This is tRNA-2-methylthio-N(6)-dimethylallyladenosine synthase from Syntrophobacter fumaroxidans (strain DSM 10017 / MPOB).